A 342-amino-acid chain; its full sequence is Heat-inducible transcription repressor HrcA (342 aa).

Belongs to the HrcA family.

In terms of biological role, negative regulator of class I heat shock genes (grpE-dnaK-dnaJ and groELS operons). Prevents heat-shock induction of these operons. This is Heat-inducible transcription repressor HrcA from Shouchella clausii (strain KSM-K16) (Alkalihalobacillus clausii).